A 354-amino-acid polypeptide reads, in one-letter code: UPF0283 membrane protein Meso_1416 (354 aa).

Residues 1 to 28 are disordered; that stretch reads MSEPRRPAAFRIEPAPSPSPEATREDVR. Transmembrane regions (helical) follow at residues 71–91 and 105–125; these read LGAV…GLWA and LGWL…AIVV.

This sequence belongs to the UPF0283 family.

The protein resides in the cell inner membrane. The polypeptide is UPF0283 membrane protein Meso_1416 (Chelativorans sp. (strain BNC1)).